Here is a 463-residue protein sequence, read N- to C-terminus: Probable mannan endo-1,4-beta-mannosidase F (463 aa).

A signal peptide spans 1–18 (MRSLSSIALLSVVGAASA). Positions 19 to 54 (QAGPWAQCGGKSFSGSSECASGWKCQELNEWFSQCV) constitute a CBM1 domain. The tract at residues 57–78 (AESTTPTVSSTPTPTDAPSVSI) is disordered. Positions 59–77 (STTPTVSSTPTPTDAPSVS) are enriched in low complexity. The tract at residues 75 to 118 (SVSITASVTTGINKSISVSSASKSTPLPSSSSASPSPRPTGSGS) is ser-rich linker. Asn87 carries an N-linked (GlcNAc...) asparagine glycan. Over residues 93-118 (SSASKSTPLPSSSSASPSPRPTGSGS) the composition is skewed to low complexity. Positions 93 to 121 (SSASKSTPLPSSSSASPSPRPTGSGSFAK) are disordered. Positions 119–463 (FAKADGLQFS…MDHMENVNKN (345 aa)) are catalytic. Substrate-binding residues include Trp171 and Asn285. Glu286 functions as the Proton donor/acceptor in the catalytic mechanism. Tyr361 is a substrate binding site. Glu395 functions as the Nucleophile in the catalytic mechanism. Trp424 contributes to the substrate binding site.

This sequence belongs to the glycosyl hydrolase 5 (cellulase A) family.

It is found in the secreted. It catalyses the reaction Random hydrolysis of (1-&gt;4)-beta-D-mannosidic linkages in mannans, galactomannans and glucomannans.. Functionally, endo-1,4-mannanase, a crucial enzyme for depolymerization of seed galactomannans and wood galactoglucomannans. The sequence is that of Probable mannan endo-1,4-beta-mannosidase F (manF) from Aspergillus oryzae (strain ATCC 42149 / RIB 40) (Yellow koji mold).